A 619-amino-acid polypeptide reads, in one-letter code: Cationic amino acid transporter 3 (619 aa).

Residues 1–36 (MLWQALRRFGQKLVRRRLLELGMGETRLARCLSTLD) are Cytoplasmic-facing. The helical transmembrane segment at 37 to 57 (LVALGVGSTLGAGVYVLAGEV) threads the bilayer. The Extracellular segment spans residues 58-61 (AKEK). A helical membrane pass occupies residues 62-82 (AGPSIVICFLVAALSSVLAGL). The Cytoplasmic segment spans residues 83–107 (CYAEFGARVPGSGSAYLYSYVTVGE). Residues 108 to 128 (LWAFTTGWNLILSYVIGTASV) form a helical membrane-spanning segment. Residues 129–162 (ARAWSSAFDNLIGNHISQTLKGTILLNMPHVLAE) are Extracellular-facing. A helical transmembrane segment spans residues 163–183 (YPDFFALALVLLLTGLLVLGA). Over 184–191 (NESGLVTK) the chain is Cytoplasmic. The chain crosses the membrane as a helical span at residues 192–212 (VFTGMNLLVLGFVIISGFIKG). Over 213–244 (ELRNWKLTKEDYCLTMSESNGTCSLDSMGSGG) the chain is Extracellular. An N-linked (GlcNAc...) asparagine glycan is attached at asparagine 232. A helical transmembrane segment spans residues 245–265 (FMPFGLEGILRGAATCFYAFV). Residues 266–285 (GFDCIATTGEEAQNPQRSIP) lie on the Cytoplasmic side of the membrane. Residues 286–306 (MGIVISLSICFLAYFGVSSAL) form a helical membrane-spanning segment. The Extracellular portion of the chain corresponds to 307–335 (TLMMPYYKLQPESPLPEAFTYVGWEPARY). The chain crosses the membrane as a helical span at residues 336–356 (LVAIGSLCALSTSLLGSMFPM). Over 357 to 382 (PRVIYAMAEDGLLFRVLARVHNGTHT) the chain is Cytoplasmic. Residues 383 to 403 (PIVATVVSGVIAAFMAFLFEL) traverse the membrane as a helical segment. The Extracellular segment spans residues 404–406 (TDL). The chain crosses the membrane as a helical span at residues 407-427 (VDLMSIGTLLAYSLVSICVLI). Residues 428-475 (LRYQPDQEMKNGEEEVELQEERTLEAEKLTVQALFCQVDSIPTLLSGR) are Cytoplasmic-facing. The helical transmembrane segment at 476–496 (IVYVCSSLLAVLLTVLCLVLT) threads the bilayer. The Extracellular portion of the chain corresponds to 497–507 (WWTTPLHSGDP). Residues 508-528 (VWVTVVVLILGLILGISGVIW) traverse the membrane as a helical segment. The Cytoplasmic segment spans residues 529–540 (RQPQNRTPLHFK). A helical transmembrane segment spans residues 541–561 (VPVVPLLPLVSIFVNVYLMMQ). At 562-569 (MTADTWAR) the chain is on the extracellular side. A helical membrane pass occupies residues 570 to 590 (FGVWMLIGFAIYFGYGIQHSV). Over 591–619 (EEVKNHQTLPKTRPQTIDLDLTTSCVHSI) the chain is Cytoplasmic. Threonine 606 bears the Phosphothreonine mark. At serine 618 the chain carries Phosphoserine.

The protein belongs to the amino acid-polyamine-organocation (APC) superfamily. Cationic amino acid transporter (CAT) (TC 2.A.3.3) family. N-glycosylated. Highly expressed in brain.

The protein localises to the cell membrane. The catalysed reaction is L-arginine(in) = L-arginine(out). The enzyme catalyses L-lysine(in) = L-lysine(out). It catalyses the reaction L-ornithine(in) = L-ornithine(out). Inhibited by high potassium ions-induced membrane depolarization. Functionally, uniporter that mediates the uptake of cationic L-amino acids such as L-arginine, L-lysine and L-ornithine. The transport is sodium ions- and pH-independent, moderately trans-stimulated and is mediated by passive diffusion. The polypeptide is Cationic amino acid transporter 3 (Rattus norvegicus (Rat)).